Reading from the N-terminus, the 402-residue chain is Exodeoxyribonuclease 7 large subunit (402 aa).

It belongs to the XseA family. In terms of assembly, heterooligomer composed of large and small subunits.

It is found in the cytoplasm. It carries out the reaction Exonucleolytic cleavage in either 5'- to 3'- or 3'- to 5'-direction to yield nucleoside 5'-phosphates.. Functionally, bidirectionally degrades single-stranded DNA into large acid-insoluble oligonucleotides, which are then degraded further into small acid-soluble oligonucleotides. The sequence is that of Exodeoxyribonuclease 7 large subunit from Moorella thermoacetica (strain ATCC 39073 / JCM 9320).